The chain runs to 160 residues: UPF0479 membrane protein YER190C-B (160 aa).

A run of 2 helical transmembrane segments spans residues isoleucine 39–glutamine 59 and valine 136–histidine 156.

This sequence belongs to the UPF0479 family.

The protein resides in the membrane. This Saccharomyces cerevisiae (strain ATCC 204508 / S288c) (Baker's yeast) protein is UPF0479 membrane protein YER190C-B.